A 394-amino-acid chain; its full sequence is Aromatic aminotransferase ISS1 (394 aa).

At G2 the chain carries N-acetylglycine. G38 contacts substrate. Residues Y64, 98-99 (AN), Y123, N176, Y207, and 230-232 (SFS) contribute to the pyridoxal 5'-phosphate site. The substrate site is built by Y123 and N176. Position 233 is an N6-(pyridoxal phosphate)lysine (K233). R241 lines the pyridoxal 5'-phosphate pocket. The substrate site is built by R362 and R374.

Belongs to the class-I pyridoxal-phosphate-dependent aminotransferase family. As to quaternary structure, homodimer. Requires pyridoxal 5'-phosphate as cofactor. As to expression, expressed in roots, cotyledons and flowers.

It is found in the cytoplasm. It catalyses the reaction a 2-oxocarboxylate + L-methionine = 4-methylsulfanyl-2-oxobutanoate + an L-alpha-amino acid. The enzyme catalyses L-tryptophan + 2-oxoglutarate = indole-3-pyruvate + L-glutamate. The catalysed reaction is L-tyrosine + 2-oxoglutarate = 3-(4-hydroxyphenyl)pyruvate + L-glutamate. Functionally, coordinates and prevents auxin (IAA) and ethylene biosynthesis, thus regulating auxin homeostasis in young seedlings. Shows aminotransferase activity with methionine; can use the ethylene biosynthetic intermediate L-methionine (L-Met) as an amino donor and the auxin biosynthetic intermediate, indole-3-pyruvic acid (3-IPA) as an amino acceptor to produce L-tryptophan (L-Trp) and 2-oxo-4-methylthiobutyric acid (KMBA). Can also use tryptophan (Trp), phenylalanine (Phe), and tyrosine (Tyr) as substrates. Regulates tryptophan (Trp) homeostasis and catabolism in mature plants. Also possibly involved in the metabolism of other aromatic amino acids and phenylpropanoid homeostasis. In Arabidopsis thaliana (Mouse-ear cress), this protein is Aromatic aminotransferase ISS1.